The chain runs to 172 residues: Shikimate kinase (172 aa).

ATP is bound at residue 17 to 22; it reads GTGKST. Position 21 (serine 21) interacts with Mg(2+). Substrate-binding residues include aspartate 39, arginine 63, and glycine 84. Arginine 122 contributes to the ATP binding site. Position 140 (arginine 140) interacts with substrate.

This sequence belongs to the shikimate kinase family. As to quaternary structure, monomer. The cofactor is Mg(2+).

The protein localises to the cytoplasm. The catalysed reaction is shikimate + ATP = 3-phosphoshikimate + ADP + H(+). Its pathway is metabolic intermediate biosynthesis; chorismate biosynthesis; chorismate from D-erythrose 4-phosphate and phosphoenolpyruvate: step 5/7. In terms of biological role, catalyzes the specific phosphorylation of the 3-hydroxyl group of shikimic acid using ATP as a cosubstrate. In Staphylococcus haemolyticus (strain JCSC1435), this protein is Shikimate kinase.